A 601-amino-acid polypeptide reads, in one-letter code: Elongation factor 4 (601 aa).

Residues 7 to 189 (RNIRNFSIIA…AIVHRIPPPK (183 aa)) enclose the tr-type G domain. GTP contacts are provided by residues 19–24 (DHGKST) and 136–139 (NKID).

The protein belongs to the TRAFAC class translation factor GTPase superfamily. Classic translation factor GTPase family. LepA subfamily.

The protein localises to the cell inner membrane. The catalysed reaction is GTP + H2O = GDP + phosphate + H(+). Functionally, required for accurate and efficient protein synthesis under certain stress conditions. May act as a fidelity factor of the translation reaction, by catalyzing a one-codon backward translocation of tRNAs on improperly translocated ribosomes. Back-translocation proceeds from a post-translocation (POST) complex to a pre-translocation (PRE) complex, thus giving elongation factor G a second chance to translocate the tRNAs correctly. Binds to ribosomes in a GTP-dependent manner. This Xanthomonas campestris pv. campestris (strain 8004) protein is Elongation factor 4.